We begin with the raw amino-acid sequence, 254 residues long: Proteasome activator complex subunit 3 (254 aa).

A2 bears the N-acetylalanine mark. Phosphoserine occurs at positions 17 and 24. An N6-acetyllysine; by P300/CBP modification is found at K195. S247 is modified (phosphoserine; by CHEK2).

The protein belongs to the PA28 family. In terms of assembly, homoheptamer; the stability of the heptamer is essential for the specific activation of the trypsine-like subunit and inhibition of the chymotrypsin-like and postglutamyl-preferring (PGPH) subunits of the proteasome. Interacts with p53/TP53 and MDM2. Interacts with MAP3K3. Associates with the proteasome. Interacts with CCAR2. Interacts with PSME3IP1 (via C-terminus); the interaction is direct and promotes the association of PSME3 with the 20S proteasome. Interacts with COIL; the interaction is inhibited by PSME3IP1. (Microbial infection) Interacts with human cytomegalovirus UL27. Phosphorylated by MAP3K3. Phosphorylation at Ser-247 promotes its association with CCAR2. In terms of processing, acetylation at the major site Lys-195 is important for oligomerization and ability to degrade its target substrates. Deacetylated by SIRT1.

The protein localises to the nucleus. It localises to the cytoplasm. Subunit of the 11S REG-gamma (also called PA28-gamma) proteasome regulator, a doughnut-shaped homoheptamer which associates with the proteasome. 11S REG-gamma activates the trypsin-like catalytic subunit of the proteasome but inhibits the chymotrypsin-like and postglutamyl-preferring (PGPH) subunits. Facilitates the MDM2-p53/TP53 interaction which promotes ubiquitination- and MDM2-dependent proteasomal degradation of p53/TP53, limiting its accumulation and resulting in inhibited apoptosis after DNA damage. May also be involved in cell cycle regulation. Mediates CCAR2 and CHEK2-dependent SIRT1 inhibition. This is Proteasome activator complex subunit 3 (PSME3) from Homo sapiens (Human).